A 538-amino-acid chain; its full sequence is Beta-1,4-mannosyl-glycoprotein 4-beta-N-acetylglucosaminyltransferase (538 aa).

Over 1 to 7 (MKMRRYK) the chain is Cytoplasmic. Residues 8-23 (LFLMFCMAGLCLISFL) traverse the membrane as a helical; Signal-anchor for type II membrane protein segment. Residues 24–538 (HFFKTLSYVT…VRGKLDTAEG (515 aa)) lie on the Lumenal side of the membrane. The segment at 120 to 161 (PGTRMLEKPSPGRTEEKTEVSEGSSARGPARRPMRHVLSSRE) is disordered. N245, N263, and N401 each carry an N-linked (GlcNAc...) asparagine glycan. A disordered region spans residues 507 to 538 (REPKSTVEGGRQNQGSDGRSSAVRGKLDTAEG).

The protein belongs to the glycosyltransferase 17 family. In terms of assembly, interacts with MGAT4D. As to expression, highly expressed in brain and kidney and to a much lesser extent in stomach, heart, intestine, uterus, testis, ovary and lung. Not present in spleen, liver and muscle. In brain, expressed in neurons of hippocampus.

It is found in the golgi apparatus membrane. The enzyme catalyses N(4)-{beta-D-GlcNAc-(1-&gt;2)-alpha-D-Man-(1-&gt;3)-[beta-D-GlcNAc-(1-&gt;2)-alpha-D-Man-(1-&gt;6)]-beta-D-Man-(1-&gt;4)-beta-D-GlcNAc-(1-&gt;4)-beta-D-GlcNAc}-L-asparaginyl-[protein] + UDP-N-acetyl-alpha-D-glucosamine = N(4)-{beta-D-GlcNAc-(1-&gt;2)-alpha-D-Man-(1-&gt;3)-[beta-D-GlcNAc-(1-&gt;4)]-[beta-D-GlcNAc-(1-&gt;2)-alpha-D-Man-(1-&gt;6)]-beta-D-Man-(1-&gt;4)-beta-D-GlcNAc-(1-&gt;4)-beta-D-GlcNAc}-L-asparaginyl-[protein] + UDP + H(+). Its pathway is protein modification; protein glycosylation. It is involved in the regulation of the biosynthesis and biological function of glycoprotein oligosaccharides. Catalyzes the addition of N-acetylglucosamine in beta 1-4 linkage to the beta-linked mannose of the trimannosyl core of N-linked sugar chains, called bisecting N-acetylglucosamine (GlcNAc). It is one of the most important enzymes involved in the regulation of the biosynthesis of glycoprotein oligosaccharides. The addition of this bisecting GlcNAc residue alters not only the composition, but also the conformation of the N-glycan. The introduction of the bisecting GlcNAc residue results in the suppression of further processing and elongation of N-glycans, precluding the formation of beta-1,6 GlcNAc branching, catalyzed by MGAT5 since it is unable to use the bisected oligosaccharide as a substrate. Addition of bisecting N-acetylglucosamine to CDH1/E-cadherin modulates CDH1 cell membrane location. Inhibits NeuAc-alpha-2,3-Gal-beta-1,4-GlcNAc- formation which modulates sialylation levels and plays a role in cell migration regulation. In brain, addition of bisecting N-acetylglucosamine to BACE1 blocks its lysosomal targeting in response to oxidative stress and further degradation which increases its location to early endosome and the APP cleavage. This chain is Beta-1,4-mannosyl-glycoprotein 4-beta-N-acetylglucosaminyltransferase, found in Mus musculus (Mouse).